A 218-amino-acid polypeptide reads, in one-letter code: Variable small protein 8 (218 aa).

The first 18 residues, 1–18 (MRKRISAIIMTLFMVFMS), serve as a signal peptide directing secretion. A lipid anchor (N-palmitoyl cysteine) is attached at cysteine 19. Residue cysteine 19 is the site of S-diacylglycerol cysteine attachment.

It belongs to the variable small protein (Vsp) family.

It is found in the cell outer membrane. In terms of biological role, the Vlp and Vsp proteins are antigenically distinct proteins, only one vlp or vsp gene is transcriptionally active at any one time. Switching between these genes is a mechanism of host immune response evasion. The chain is Variable small protein 8 from Borrelia hermsii.